Consider the following 224-residue polypeptide: MSVTKAAVKAVHLGRISYHSALKIQQQHIQQHLDSSSNIPNTLLLCEHEPVYTIGLRQAPYPPAEEQRLKALGADFCRTNRGGLITFHGPGQLVCYPILNLGCFKKSVRWYVCELERTVIKMCGKFGIKASTSPDTGVWVGDNKICAIGIHCGRYITSHGLALNCNTDMSWFDNIVPCGIVGKGVTSLSQELERDVPPDEAIPKLLEAFTEQFNCTLTYNGSLS.

Residues 37–217 enclose the BPL/LPL catalytic domain; the sequence is SNIPNTLLLC…AFTEQFNCTL (181 aa). Residues 81 to 88, 147 to 149, and 160 to 162 contribute to the substrate site; these read RGGLITFH, AIG, and GLA. The active-site Acyl-thioester intermediate is the C178.

Belongs to the LipB family.

The protein resides in the mitochondrion. The enzyme catalyses octanoyl-[ACP] + L-lysyl-[protein] = N(6)-octanoyl-L-lysyl-[protein] + holo-[ACP] + H(+). It functions in the pathway protein modification; protein lipoylation via endogenous pathway; protein N(6)-(lipoyl)lysine from octanoyl-[acyl-carrier-protein]: step 1/2. Functionally, catalyzes the transfer of endogenously produced octanoic acid from octanoyl-acyl-carrier-protein (octanoyl-ACP) onto the lipoyl domains of lipoate-dependent enzymes such as the protein H of the glycine cleavage system (GCSH). Lipoyl-ACP can also act as a substrate although octanoyl-ACP is likely to be the physiological substrate. This chain is Octanoyl-[acyl-carrier-protein]:protein N-octanoyltransferase LIPT2, mitochondrial (lipt2), found in Danio rerio (Zebrafish).